A 587-amino-acid polypeptide reads, in one-letter code: APOBEC1 complementation factor (587 aa).

RRM domains follow at residues 56–134 (CEIF…ASVD), 136–218 (CRLF…WAEP), and 231–303 (KILY…LAKP). The interval 360 to 409 (HFPATKGHLSNRAIIRAPSVRGAAGVRGLGGRGYLAYTGLGRGYQVKGDK) is required for nuclear localization. T491 is modified (phosphothreonine).

As to quaternary structure, part of the apolipoprotein B mRNA editing complex with APOBEC1. Interacts with TNPO2; TNPO2 may be responsible for transport of A1CF into the nucleus. Interacts with SYNCRIP. Interacts with CELF2/CUGBP2. Interacts with RBM47.

The protein localises to the nucleus. Its subcellular location is the endoplasmic reticulum. It is found in the cytoplasm. Its function is as follows. Essential component of the apolipoprotein B mRNA editing enzyme complex which is responsible for the postranscriptional editing of a CAA codon for Gln to a UAA codon for stop in APOB mRNA. Binds to APOB mRNA and is probably responsible for docking the catalytic subunit, APOBEC1, to the mRNA to allow it to deaminate its target cytosine. The complex also seems to protect the edited APOB mRNA from nonsense-mediated decay. This chain is APOBEC1 complementation factor (A1CF), found in Pongo abelii (Sumatran orangutan).